Here is a 208-residue protein sequence, read N- to C-terminus: Imidazole glycerol phosphate synthase subunit HisH (208 aa).

Positions 1–206 (MIVIIDYDTG…KEVTYSCKSS (206 aa)) constitute a Glutamine amidotransferase type-1 domain. The Nucleophile role is filled by cysteine 79. Catalysis depends on residues histidine 181 and glutamate 183.

As to quaternary structure, heterodimer of HisH and HisF.

Its subcellular location is the cytoplasm. It catalyses the reaction 5-[(5-phospho-1-deoxy-D-ribulos-1-ylimino)methylamino]-1-(5-phospho-beta-D-ribosyl)imidazole-4-carboxamide + L-glutamine = D-erythro-1-(imidazol-4-yl)glycerol 3-phosphate + 5-amino-1-(5-phospho-beta-D-ribosyl)imidazole-4-carboxamide + L-glutamate + H(+). The catalysed reaction is L-glutamine + H2O = L-glutamate + NH4(+). It functions in the pathway amino-acid biosynthesis; L-histidine biosynthesis; L-histidine from 5-phospho-alpha-D-ribose 1-diphosphate: step 5/9. IGPS catalyzes the conversion of PRFAR and glutamine to IGP, AICAR and glutamate. The HisH subunit catalyzes the hydrolysis of glutamine to glutamate and ammonia as part of the synthesis of IGP and AICAR. The resulting ammonia molecule is channeled to the active site of HisF. The sequence is that of Imidazole glycerol phosphate synthase subunit HisH from Listeria monocytogenes serotype 4a (strain HCC23).